We begin with the raw amino-acid sequence, 267 residues long: Probable proteasome subunit beta type-2 (267 aa).

Residues 1 to 35 (MMGINERKGFDFEYYQRNLLLQEKGFPTPKATSTG) constitute a propeptide, removed in mature form. Thr36 (nucleophile) is an active-site residue.

It belongs to the peptidase T1B family. As to quaternary structure, the 26S proteasome consists of a 20S proteasome core and two 19S regulatory subunits. The 20S proteasome core is composed of 28 subunits that are arranged in four stacked rings, resulting in a barrel-shaped structure. The two end rings are each formed by seven alpha subunits, and the two central rings are each formed by seven beta subunits. The catalytic chamber with the active sites is on the inside of the barrel.

It localises to the cytoplasm. The protein resides in the nucleus. The catalysed reaction is Cleavage of peptide bonds with very broad specificity.. Its function is as follows. The proteasome is a multicatalytic proteinase complex which is characterized by its ability to cleave peptides with Arg, Phe, Tyr, Leu, and Glu adjacent to the leaving group at neutral or slightly basic pH. The proteasome has an ATP-dependent proteolytic activity (Potential). This chain is Probable proteasome subunit beta type-2 (pup1), found in Schizosaccharomyces pombe (strain 972 / ATCC 24843) (Fission yeast).